Reading from the N-terminus, the 162-residue chain is Probable chemoreceptor glutamine deamidase CheD (162 aa).

This sequence belongs to the CheD family.

It carries out the reaction L-glutaminyl-[protein] + H2O = L-glutamyl-[protein] + NH4(+). Probably deamidates glutamine residues to glutamate on methyl-accepting chemotaxis receptors (MCPs), playing an important role in chemotaxis. The polypeptide is Probable chemoreceptor glutamine deamidase CheD (Clostridium botulinum (strain ATCC 19397 / Type A)).